The following is a 245-amino-acid chain: Ribonuclease 3 (245 aa).

The RNase III domain occupies leucine 18–glycine 146. Glutamate 59 is a Mg(2+) binding site. Aspartate 63 is an active-site residue. Mg(2+) contacts are provided by aspartate 132 and glutamate 135. Glutamate 135 is a catalytic residue. In terms of domain architecture, DRBM spans aspartate 173–asparagine 242.

It belongs to the ribonuclease III family. Homodimer. The cofactor is Mg(2+).

It is found in the cytoplasm. It carries out the reaction Endonucleolytic cleavage to 5'-phosphomonoester.. Digests double-stranded RNA. Involved in the processing of primary rRNA transcript to yield the immediate precursors to the large and small rRNAs (23S and 16S). Processes some mRNAs, and tRNAs when they are encoded in the rRNA operon. Processes pre-crRNA and tracrRNA of type II CRISPR loci if present in the organism. This is Ribonuclease 3 from Borreliella burgdorferi (strain ATCC 35210 / DSM 4680 / CIP 102532 / B31) (Borrelia burgdorferi).